The chain runs to 102 residues: Small ribosomal subunit protein uS10 (102 aa).

The protein belongs to the universal ribosomal protein uS10 family. In terms of assembly, part of the 30S ribosomal subunit.

Functionally, involved in the binding of tRNA to the ribosomes. The chain is Small ribosomal subunit protein uS10 from Methanosphaerula palustris (strain ATCC BAA-1556 / DSM 19958 / E1-9c).